Consider the following 480-residue polypeptide: Glutamate--tRNA ligase (480 aa).

The 'HIGH' region motif lies at 8 to 18 (PSPTGPLHIGG). The 'KMSKS' region motif lies at 249 to 253 (KMSKR). Lysine 252 serves as a coordination point for ATP.

It belongs to the class-I aminoacyl-tRNA synthetase family. Glutamate--tRNA ligase type 1 subfamily. In terms of assembly, monomer.

Its subcellular location is the cytoplasm. The enzyme catalyses tRNA(Glu) + L-glutamate + ATP = L-glutamyl-tRNA(Glu) + AMP + diphosphate. In terms of biological role, catalyzes the attachment of glutamate to tRNA(Glu) in a two-step reaction: glutamate is first activated by ATP to form Glu-AMP and then transferred to the acceptor end of tRNA(Glu). In Carboxydothermus hydrogenoformans (strain ATCC BAA-161 / DSM 6008 / Z-2901), this protein is Glutamate--tRNA ligase.